The sequence spans 715 residues: Tegument protein UL46 (715 aa).

Disordered regions lie at residues 432–513 (WSAG…CAAQ), 585–605 (DDAR…APYE), and 659–680 (GSAL…PSPV). A compositionally biased stretch (gly residues) spans 444-455 (GPGGHRAGGGTV). Composition is skewed to low complexity over residues 456 to 467 (GKRFSGPARQRA) and 475 to 488 (PTLD…VPEA). Residues 664–677 (SPPPRPPPPPPLSP) show a composition bias toward pro residues.

This sequence belongs to the herpesviridae HHV-1 VP11/12 protein family. Interacts with VP16. Interacts with host LCK, PIK3R1, SHC1 AND GRB2; these interactions promote the activation of the PI3K/AKT pathway. Interacts with host YWHAB. Interacts with ICP0; this interaction targets UL46 for degradation by the proteasome. Phosphorylated by host LCK. The phosphorylation seems to be lymphocyte-specific.

It is found in the virion tegument. Its subcellular location is the host cell membrane. Functionally, plays a role in the activation of the host PI3K/AKT pathway to promote cell survival. Interacts with and activates host LCK and thereby recruits downstream partners SHC1, GRB2 and PI3KR1 in order to activate the PI3K pathway by phosphorylating host AKT on its activating residues. This mechanism is inhibited by the viral protein US3 that instead promotes incorporation of UL46 into virions. The chain is Tegument protein UL46 from Human herpesvirus 1 (strain F) (HHV-1).